The primary structure comprises 266 residues: MPRSFLVKKHFNSAKKPNYGELDNHTVIISPFLYERYPVSVLPQPDIYSSVAYSPITVWTGLLHPPLPSDLSPLSGYPSSLGRVSPPPQSDTSSKDHSGSESPISDEEERLQTKLSDSHAIEAEKFQCSLCSKTYSTFSGLAKHKQLHCDAQSRKSFSCKYCEKEYVSLGALKMHIRTHTLPCVCKICGKAFSRPWLLQGHIRTHTGEKPFSCPHCNRAFADRSNLRAHLQTHSDVKKYQCKNCSKTFSRMSLLHKHEESGCCVAH.

Residues 1–20 (MPRSFLVKKHFNSAKKPNYG) are SNAG domain. The disordered stretch occupies residues 75–115 (SGYPSSLGRVSPPPQSDTSSKDHSGSESPISDEEERLQTKL). 4 consecutive C2H2-type zinc fingers follow at residues 126-148 (FQCS…KQLH), 157-179 (FSCK…IRTH), 183-205 (CVCK…IRTH), and 211-233 (FSCP…LQTH). Residues 239-262 (YQCKNCSKTFSRMSLLHKHEESGC) form a C2H2-type 5; atypical zinc finger.

This sequence belongs to the snail C2H2-type zinc-finger protein family. As to quaternary structure, interacts (via SNAG domain) with limd1 (via LIM domains), wtip (via LIM domains) and ajuba (via LIM domains). Interacts with elp3. As to expression, first expressed on the lateral side of stage 12 embryos. At stage 14, strongly expressed in the lateral neural folds. At stage 16, expressed in pre-migratory neural crest cells. At stage 18, expression is dispersed over the neural plate in a pattern surrounding the rhombomeres. At stage 22, expressed in neural crest derivatives, including the branchial arches and the tissues surrounding the eyes and forebrain. After stage 17, expression is weak in the lateral plate mesoderm, increasing at stage 26, but was down-regulated in the pronephros region at stage 26.

It is found in the nucleus. Probable transcriptional repressor. Acts downstream of snai1 in the specification of the neural crest and neural crest migration. This chain is Zinc finger protein SNAI2 (snai2), found in Xenopus laevis (African clawed frog).